The chain runs to 312 residues: MFNRIHITVNQLVASDLFLGYHIANWNPRTNFFLIGKYKNTNIFNLNYTYFLAKKFIVFLSELFVNKGHLWLVNENFSLFNRSSELYQLYSLFPEITFLNSKWCKGMLSNYKYVSIVKPAKFPHSIFVPNIQNNHYVINESFIINIPSIAIVDSIDNPSNVFFPIPGNSKSLKSLFFFYMVIAKSLFYSRYITSSKFIFNSINRLNGLNSKLYRNLFVRDYFAFFKKRFLLENIIFLFKSGFFSKKKFNFLFRPKMHITSKTLLFKWKMPLLILSSVFKNVLHWDIFNKIVLKKRLVVKNLQFFKTLMFVLI.

The protein belongs to the universal ribosomal protein uS2 family.

It is found in the mitochondrion. This chain is Small ribosomal subunit protein uS2m (RPS2), found in Acanthamoeba castellanii (Amoeba).